Consider the following 352-residue polypeptide: PDZ and LIM domain protein 2 (352 aa).

In terms of domain architecture, PDZ spans 1–84; sequence MALTVDVAGP…PLRLQLDRSQ (84 aa). Disordered stretches follow at residues 69 to 95 and 108 to 141; these read IRQS…NGDS and VRTH…PPPF. A compositionally biased stretch (polar residues) spans 81–95; the sequence is DRSQAASPGQTNGDS. Residues 117-135 show a composition bias toward low complexity; the sequence is SLRSSYSSPTSLSPRAGSP. S124 carries the post-translational modification Phosphoserine. T126 carries the phosphothreonine modification. S127, S129, S134, S137, S143, S161, S197, S203, S213, and S266 each carry phosphoserine. Disordered stretches follow at residues 170–214 and 253–275; these read LSYS…GGSL and ERGG…PASR. Residues 258–275 show a composition bias toward low complexity; sequence PAFLPSSLSPQSSLPASR. Residues 284–344 form the LIM zinc-binding domain; that stretch reads HTCEKCSTSI…EKHARQRYSA (61 aa).

Interacts with alpha-actinins ACTN1 and ACTN4, FLNA and MYH9. Interacts (via LIM zinc-binding domain) with MKRN2.

The protein localises to the cytoplasm. It localises to the cytoskeleton. Functionally, probable adapter protein located at the actin cytoskeleton that promotes cell attachment. Necessary for the migratory capacity of epithelial cells. Overexpression enhances cell adhesion to collagen and fibronectin and suppresses anchorage independent growth. May contribute to tumor cell migratory capacity. The polypeptide is PDZ and LIM domain protein 2 (PDLIM2) (Macaca fascicularis (Crab-eating macaque)).